A 200-amino-acid polypeptide reads, in one-letter code: Probable molybdenum cofactor guanylyltransferase (200 aa).

Residues 9 to 11 (LAG), Lys-21, Asp-69, and Asp-100 each bind GTP. Mg(2+) is bound at residue Asp-100.

The protein belongs to the MobA family. Mg(2+) is required as a cofactor.

It localises to the cytoplasm. The catalysed reaction is Mo-molybdopterin + GTP + H(+) = Mo-molybdopterin guanine dinucleotide + diphosphate. Functionally, transfers a GMP moiety from GTP to Mo-molybdopterin (Mo-MPT) cofactor (Moco or molybdenum cofactor) to form Mo-molybdopterin guanine dinucleotide (Mo-MGD) cofactor. This chain is Probable molybdenum cofactor guanylyltransferase, found in Bacillus cereus (strain AH187).